The following is a 79-amino-acid chain: DNA gyrase inhibitor YacG (79 aa).

4 residues coordinate Zn(2+): Cys7, Cys10, Cys26, and Cys30.

It belongs to the DNA gyrase inhibitor YacG family. In terms of assembly, interacts with GyrB. It depends on Zn(2+) as a cofactor.

Functionally, inhibits all the catalytic activities of DNA gyrase by preventing its interaction with DNA. Acts by binding directly to the C-terminal domain of GyrB, which probably disrupts DNA binding by the gyrase. The polypeptide is DNA gyrase inhibitor YacG (Shewanella pealeana (strain ATCC 700345 / ANG-SQ1)).